The sequence spans 335 residues: ETS translocation variant 2 (335 aa).

Disordered stretches follow at residues 94-138 (DPWS…SWSH) and 201-220 (GHQS…SDRA). Over residues 205–220 (PAFTTPSKSNKQSDRA) the composition is skewed to polar residues. The segment at residues 234 to 314 (IQLWQFLLEL…GGRKYTYRFG (81 aa)) is a DNA-binding region (ETS).

It belongs to the ETS family. In terms of tissue distribution, testis.

The protein resides in the nucleus. Functionally, binds to DNA sequences containing the consensus pentanucleotide 5'-CGGA[AT]-3'. In Mus musculus (Mouse), this protein is ETS translocation variant 2 (Etv2).